Here is a 25-residue protein sequence, read N- to C-terminus: Pancreatic triacylglycerol lipase (25 aa).

A disulfide bridge connects residues C4 and C10.

It belongs to the AB hydrolase superfamily. Lipase family. Forms a 1:1 stoichiometric complex with (pro)colipase/CLPS.

Its subcellular location is the secreted. The catalysed reaction is a triacylglycerol + H2O = a diacylglycerol + a fatty acid + H(+). It catalyses the reaction 1,2,3-tributanoylglycerol + H2O = dibutanoylglycerol + butanoate + H(+). It carries out the reaction 1,2,3-tri-(9Z-octadecenoyl)-glycerol + H2O = di-(9Z)-octadecenoylglycerol + (9Z)-octadecenoate + H(+). The enzyme catalyses all-trans-retinyl hexadecanoate + H2O = all-trans-retinol + hexadecanoate + H(+). The catalysed reaction is 1,2-di-(9Z-octadecenoyl)-glycerol + H2O = (9Z-octadecenoyl)-glycerol + (9Z)-octadecenoate + H(+). Its activity is regulated as follows. Inhibited by bile salts, is reactivated by (pro)colipase/CLPS. Its function is as follows. Plays an important role in fat metabolism. It preferentially splits the esters of long-chain fatty acids at positions 1 and 3, producing mainly 2-monoacylglycerol and free fatty acids, and shows considerably higher activity against insoluble emulsified substrates than against soluble ones. The sequence is that of Pancreatic triacylglycerol lipase (PNLIP) from Felis catus (Cat).